A 52-amino-acid polypeptide reads, in one-letter code: Large ribosomal subunit protein bL33 (52 aa).

The protein belongs to the bacterial ribosomal protein bL33 family.

This Chlamydia pneumoniae (Chlamydophila pneumoniae) protein is Large ribosomal subunit protein bL33 (rpmG).